Consider the following 511-residue polypeptide: uncharacterized protein (511 aa).

Residues 59-79 (VPVAANDDQPDGSRQSVRGRQ) are disordered.

This sequence belongs to the transposase 25 family.

This is an uncharacterized protein from Sinorhizobium fredii (strain NBRC 101917 / NGR234).